The following is a 462-amino-acid chain: NEDD8-activating enzyme E1 catalytic subunit (462 aa).

A2 is subject to N-acetylalanine. An interaction with UBE2M N-terminus region spans residues 53 to 70 (HPDFEPSTESLQFLLDTC). ATP is bound by residues 100–124 (DMDT…GRPK) and 148–171 (IQDF…SIIA). Interaction with UBE2M N-terminus regions lie at residues 157 to 161 (RQFHI) and 192 to 217 (PSSI…LPGM). Residues 227 to 229 (LYP) form an interaction with NEDD8 region. Residue C237 is the Glycyl thioester intermediate of the active site. 2 interaction with NAE1 regions span residues 242-248 (MPRLPEH) and 292-295 (YNIR). Residues 331-338 (IATSAYIP) are interaction with UBE2M N-terminus. The interval 352 to 357 (YTYTFE) is interaction with NEDD8. Residues 368-462 (SQLPQNIQFS…QTVLFKLHFT (95 aa)) form an interaction with UBE2M core domain region.

It belongs to the ubiquitin-activating E1 family. UBA3 subfamily. In terms of assembly, heterodimer of UBA3 and NAE1. Interacts with NEDD8, UBE2F and UBE2M. Binds ESR1 and ESR2 with bound steroid ligand. Interacts with TBATA.

It catalyses the reaction ATP + [NEDD8 protein] + [E1 NEDD8-activating enzyme]-L-cysteine = AMP + diphosphate + [E1 NEDD8-activating enzyme]-S-[NEDD8 protein]-yl-L-cysteine.. The protein operates within protein modification; protein neddylation. Binding of TP53BP2 to the regulatory subunit NAE1 decreases activity. In terms of biological role, catalytic subunit of the dimeric UBA3-NAE1 E1 enzyme. E1 activates NEDD8 by first adenylating its C-terminal glycine residue with ATP, thereafter linking this residue to the side chain of the catalytic cysteine, yielding a NEDD8-UBA3 thioester and free AMP. E1 finally transfers NEDD8 to the catalytic cysteine of UBE2M. Down-regulates steroid receptor activity. Necessary for cell cycle progression. In Mus musculus (Mouse), this protein is NEDD8-activating enzyme E1 catalytic subunit (Uba3).